A 79-amino-acid polypeptide reads, in one-letter code: Putative membrane protein insertion efficiency factor (79 aa).

It belongs to the UPF0161 family.

The protein resides in the cell inner membrane. In terms of biological role, could be involved in insertion of integral membrane proteins into the membrane. This chain is Putative membrane protein insertion efficiency factor, found in Bacteroides thetaiotaomicron (strain ATCC 29148 / DSM 2079 / JCM 5827 / CCUG 10774 / NCTC 10582 / VPI-5482 / E50).